Consider the following 211-residue polypeptide: FMN-dependent NADH:quinone oxidoreductase 3 (211 aa).

102-105 (MWNF) lines the FMN pocket.

This sequence belongs to the azoreductase type 1 family. Homodimer. FMN serves as cofactor.

The catalysed reaction is 2 a quinone + NADH + H(+) = 2 a 1,4-benzosemiquinone + NAD(+). The enzyme catalyses N,N-dimethyl-1,4-phenylenediamine + anthranilate + 2 NAD(+) = 2-(4-dimethylaminophenyl)diazenylbenzoate + 2 NADH + 2 H(+). In terms of biological role, quinone reductase that provides resistance to thiol-specific stress caused by electrophilic quinones. Also exhibits azoreductase activity. Catalyzes the reductive cleavage of the azo bond in aromatic azo compounds to the corresponding amines. This is FMN-dependent NADH:quinone oxidoreductase 3 from Bacillus anthracis.